A 459-amino-acid chain; its full sequence is Putrescine aminotransferase (459 aa).

Pyridoxal 5'-phosphate-binding positions include glycine 150 to threonine 151 and glutamine 274. Lysine 300 carries the N6-(pyridoxal phosphate)lysine modification. Position 332 (threonine 332) interacts with pyridoxal 5'-phosphate.

It belongs to the class-III pyridoxal-phosphate-dependent aminotransferase family. Putrescine aminotransferase subfamily. Pyridoxal 5'-phosphate serves as cofactor.

The catalysed reaction is an alkane-alpha,omega-diamine + 2-oxoglutarate = an omega-aminoaldehyde + L-glutamate. It carries out the reaction putrescine + 2-oxoglutarate = 1-pyrroline + L-glutamate + H2O. The enzyme catalyses cadaverine + 2-oxoglutarate = 5-aminopentanal + L-glutamate. It functions in the pathway amine and polyamine degradation; putrescine degradation; 4-aminobutanal from putrescine (transaminase route): step 1/1. Its function is as follows. Catalyzes the aminotransferase reaction from putrescine to 2-oxoglutarate, leading to glutamate and 4-aminobutanal, which spontaneously cyclizes to form 1-pyrroline. This is the first step in one of two pathways for putrescine degradation, where putrescine is converted into 4-aminobutanoate (gamma-aminobutyrate or GABA) via 4-aminobutanal. Also functions as a cadaverine transaminase in a a L-lysine degradation pathway to succinate that proceeds via cadaverine, glutarate and L-2-hydroxyglutarate. The protein is Putrescine aminotransferase of Salmonella paratyphi A (strain ATCC 9150 / SARB42).